Here is a 98-residue protein sequence, read N- to C-terminus: NADH-ubiquinone oxidoreductase chain 4L (98 aa).

Helical transmembrane passes span 1–21 (MSLV…GLLM), 29–49 (ALLC…LTIL), and 61–81 (IILL…LIMI).

Belongs to the complex I subunit 4L family. Core subunit of respiratory chain NADH dehydrogenase (Complex I) which is composed of 45 different subunits.

Its subcellular location is the mitochondrion inner membrane. It carries out the reaction a ubiquinone + NADH + 5 H(+)(in) = a ubiquinol + NAD(+) + 4 H(+)(out). Functionally, core subunit of the mitochondrial membrane respiratory chain NADH dehydrogenase (Complex I) which catalyzes electron transfer from NADH through the respiratory chain, using ubiquinone as an electron acceptor. Part of the enzyme membrane arm which is embedded in the lipid bilayer and involved in proton translocation. This Monodon monoceros (Narwhal) protein is NADH-ubiquinone oxidoreductase chain 4L (MT-ND4L).